A 408-amino-acid polypeptide reads, in one-letter code: MGLIVQKFGGTSVGSVEKIQNAANRAIAEKQKGHQVVVVVSAMGKSTDELVSLAKAISDQPSKREMDMLLATGEQVTISLLSMALQEKGYDAVSYTGWQAGIRTEAIHGNARITDIDTSVLADQLEKGKIVIVAGFQGMTEDCEITTLGRGGSDTTAVALAAALKADKCDIYTDVPGVFTTDPRYVKSARKLEGISYDEMLELANLGAGVLHPRAVEFAKNYQVPLEVRSSTETEAGTLIEEESSMEQNLIVRGIAFEDQITRVTIYGLTSGLTTLSTIFTTLAKRNINVDIIIQTQAEDKTGISFSVKTEDADQTVAVLEEYKDALEFEKIETESKLAKVSIVGSGMVSNPGVAAEMFAVLAQKNILIKMVSTSEIKVSTVVSENDMVKAVESLHDAFELSKHPSAV.

7–10 (KFGG) provides a ligand contact to ATP. 25-30 (RAIAEK) provides a ligand contact to substrate. ATP is bound at residue serine 41. Substrate contacts are provided by residues 47-49 (TDE), glutamate 74, 125-126 (LE), 150-153 (RGGS), and serine 153. Residues 173-174 (TD) and 179-184 (FTTDPR) contribute to the ATP site. ACT domains follow at residues 264–337 (VTIY…TESK) and 343–408 (IVGS…PSAV). Residues 289–291 (NVD), glutamine 295, 354–355 (VA), 368–369 (LI), and 375–376 (SE) contribute to the substrate site.

The protein belongs to the aspartokinase family. Tetramer consisting of 2 isoforms Alpha (catalytic and regulation) and of a homodimer of 2 isoforms Beta (regulation).

It carries out the reaction L-aspartate + ATP = 4-phospho-L-aspartate + ADP. It participates in amino-acid biosynthesis; L-lysine biosynthesis via DAP pathway; (S)-tetrahydrodipicolinate from L-aspartate: step 1/4. The protein operates within amino-acid biosynthesis; L-methionine biosynthesis via de novo pathway; L-homoserine from L-aspartate: step 1/3. Its pathway is amino-acid biosynthesis; L-threonine biosynthesis; L-threonine from L-aspartate: step 1/5. Lysine-sensitive. Regulated by degradation in response to starvation of cells for various nutrients. Ammonium starvation induced the fastest aspartokinase II decline, followed by amino acid starvation and glucose limitation. Functionally, catalyzes the phosphorylation of the beta-carboxyl group of aspartic acid with ATP to yield 4-phospho-L-aspartate, which is involved in the branched biosynthetic pathway leading to the biosynthesis of amino acids threonine, isoleucine and methionine. This is Aspartokinase 2 (lysC) from Bacillus subtilis (strain 168).